The sequence spans 302 residues: Ribonuclease HII (302 aa).

The RNase H type-2 domain maps to 53 to 297 (EFEIGVDEVG…VQQAIEGTLA (245 aa)). 3 residues coordinate a divalent metal cation: Asp59, Glu60, and Asp163.

It belongs to the RNase HII family. It depends on Mn(2+) as a cofactor. Mg(2+) serves as cofactor.

It localises to the cytoplasm. The catalysed reaction is Endonucleolytic cleavage to 5'-phosphomonoester.. Endonuclease that specifically degrades the RNA of RNA-DNA hybrids. The polypeptide is Ribonuclease HII (Psychrobacter sp. (strain PRwf-1)).